Consider the following 457-residue polypeptide: Siroheme synthase (457 aa).

A precorrin-2 dehydrogenase /sirohydrochlorin ferrochelatase region spans residues 1-204; that stretch reads MDHLPIFCQL…NDQKAITETT (204 aa). NAD(+)-binding positions include 22–23 and 43–44; these read DV and LA. The residue at position 128 (Ser128) is a Phosphoserine. The interval 216 to 457 is uroporphyrinogen-III C-methyltransferase; sequence GEVVLVGAGP…RDKLNWFSNH (242 aa). Pro225 lines the S-adenosyl-L-methionine pocket. The Proton acceptor role is filled by Asp248. Lys270 acts as the Proton donor in catalysis. S-adenosyl-L-methionine-binding positions include 301–303, Ile306, 331–332, Met382, and Gly411; these read GGD and TA.

It in the N-terminal section; belongs to the precorrin-2 dehydrogenase / sirohydrochlorin ferrochelatase family. In the C-terminal section; belongs to the precorrin methyltransferase family.

The catalysed reaction is uroporphyrinogen III + 2 S-adenosyl-L-methionine = precorrin-2 + 2 S-adenosyl-L-homocysteine + H(+). It carries out the reaction precorrin-2 + NAD(+) = sirohydrochlorin + NADH + 2 H(+). The enzyme catalyses siroheme + 2 H(+) = sirohydrochlorin + Fe(2+). It functions in the pathway cofactor biosynthesis; adenosylcobalamin biosynthesis; precorrin-2 from uroporphyrinogen III: step 1/1. It participates in cofactor biosynthesis; adenosylcobalamin biosynthesis; sirohydrochlorin from precorrin-2: step 1/1. The protein operates within porphyrin-containing compound metabolism; siroheme biosynthesis; precorrin-2 from uroporphyrinogen III: step 1/1. Its pathway is porphyrin-containing compound metabolism; siroheme biosynthesis; siroheme from sirohydrochlorin: step 1/1. It functions in the pathway porphyrin-containing compound metabolism; siroheme biosynthesis; sirohydrochlorin from precorrin-2: step 1/1. Multifunctional enzyme that catalyzes the SAM-dependent methylations of uroporphyrinogen III at position C-2 and C-7 to form precorrin-2 via precorrin-1. Then it catalyzes the NAD-dependent ring dehydrogenation of precorrin-2 to yield sirohydrochlorin. Finally, it catalyzes the ferrochelation of sirohydrochlorin to yield siroheme. The sequence is that of Siroheme synthase from Shigella flexneri.